Here is a 233-residue protein sequence, read N- to C-terminus: Proteasome subunit beta type-6 (233 aa).

A propeptide spans 1–12 (MDLNLDAPHSMG) (removed in mature form). Catalysis depends on Thr-13, which acts as the Nucleophile.

Belongs to the peptidase T1B family. In terms of assembly, component of the 20S core complex of the 26S proteasome. The 26S proteasome is composed of a core protease (CP), known as the 20S proteasome, capped at one or both ends by the 19S regulatory particle (RP/PA700). The 20S proteasome core is composed of 28 subunits that are arranged in four stacked rings, resulting in a barrel-shaped structure. The two end rings are each formed by seven alpha subunits, and the two central rings are each formed by seven beta subunits. The catalytic chamber with the active sites is on the inside of the barrel.

The protein resides in the cytoplasm. Its subcellular location is the nucleus. The enzyme catalyses Cleavage of peptide bonds with very broad specificity.. Its function is as follows. The proteasome is a multicatalytic proteinase complex which is characterized by its ability to cleave peptides with Arg, Phe, Tyr, Leu, and Glu adjacent to the leaving group at neutral or slightly basic pH. The proteasome has an ATP-dependent proteolytic activity. This is Proteasome subunit beta type-6 (PBA1) from Arabidopsis thaliana (Mouse-ear cress).